Here is a 501-residue protein sequence, read N- to C-terminus: MRYHISTNFFKKKYSDCLVFGIFDDLQLCESVKVIDSGSDGYVSRLIKDNEISGQINESLLLHSIPNFQKLKILFLGCGKKERFNINLYQKLFKTSINIIKKLSVKALIYFVTDFHIKNINTYWKIRHAVSEIQDNLYSFKNFKTSNNKNKFKISLEDIYFYLSDHDEINSGNNAIQHGYAISKGKKIARDLSNMPPNICNSSYLADQAMKLSQYYPDLIDVEIINDIDMNKLGMNAYLSVGKGSKNKSLMSIIKYHGISFSQCKNIILIGKGVTFDSGGISIKTSRDLDEMKFDMSGAAIVFGLMSIISDLKLPLNIIGILAGSENMVSSMSFRPGDILTTMSGKTVEILNTDAEGRLILCDVLTYVERFSPEVVIDIATLTGACVVALGHHTTGLLSNNDILAKDLQKASKQTRDLIWRMPLFEEYYKDLDSNVADMANVGTNSAGMITAACFLSKFSQKYAWAHLDVAGTAWISGKNKGSTGRPINLLTQFLLNKLYK.

Positions 272 and 277 each coordinate Mn(2+). The active site involves Lys-284. Residues Asp-295, Asp-354, and Glu-356 each coordinate Mn(2+). Residue Arg-358 is part of the active site.

Belongs to the peptidase M17 family. Mn(2+) is required as a cofactor.

It localises to the cytoplasm. It carries out the reaction Release of an N-terminal amino acid, Xaa-|-Yaa-, in which Xaa is preferably Leu, but may be other amino acids including Pro although not Arg or Lys, and Yaa may be Pro. Amino acid amides and methyl esters are also readily hydrolyzed, but rates on arylamides are exceedingly low.. It catalyses the reaction Release of an N-terminal amino acid, preferentially leucine, but not glutamic or aspartic acids.. Its function is as follows. Presumably involved in the processing and regular turnover of intracellular proteins. Catalyzes the removal of unsubstituted N-terminal amino acids from various peptides. This is Probable cytosol aminopeptidase from Buchnera aphidicola subsp. Baizongia pistaciae (strain Bp).